Reading from the N-terminus, the 165-residue chain is Choriogonadotropin subunit beta (165 aa).

Positions 1-20 (METLQGLLLWLLLSMGGAQA) are cleaved as a signal peptide. Intrachain disulfides connect C29–C77, C43–C92, C46–C130, C54–C108, C58–C110, and C113–C120. 2 N-linked (GlcNAc...) asparagine glycosylation sites follow: N33 and N50. Residues 131 to 165 (DDPNLQASSSSKDPPPSPPSPSRLLEPAGTPFLPQ) form a disordered region. Residues S141, S147, and S152 are each glycosylated (O-linked (GalNAc...) serine).

Belongs to the glycoprotein hormones subunit beta family. Heterodimer of a common alpha chain and a unique beta chain which confers biological specificity to thyrotropin, lutropin, follitropin and gonadotropin. In terms of tissue distribution, placenta.

The protein resides in the secreted. Functionally, stimulates the ovaries to synthesize the steroids that are essential for the maintenance of pregnancy. The sequence is that of Choriogonadotropin subunit beta (CGB) from Papio anubis (Olive baboon).